A 339-amino-acid chain; its full sequence is MVREEVAGSTQTLQWKCVESRVDSKRLYYGRFILSPLRKGQADTVGIALRRALLGEIEGTCITRAKFGSVPHEYSTIAGIEESVQEILLNLKEIVLRSNLYGVRDASICVKGPRYITAQDIILPPSVEIVDTAQPIANLTEPIDFCIDLQIKRDRGYQTELRKNYQDGSYPIDAVSMPVRNVNYSIFSCGNGNEKHEILFLEIWTNGSLTPKEALYEASRNLIDLFLPFLHAEEEGTSFEENKNRFTPPPFTFQKRLTNLKKNKKGIPLNCIFIDQLELTSRTYNCLKRANIHTLLDLLSKTEEDLLRIDSFRMEDRKHIWDTLEKHLPIDLLKNKLSF.

The tract at residues 1–233 (MVREEVAGST…DLFLPFLHAE (233 aa)) is alpha N-terminal domain (alpha-NTD). Residues 264–339 (KKGIPLNCIF…IDLLKNKLSF (76 aa)) are alpha C-terminal domain (alpha-CTD).

The protein belongs to the RNA polymerase alpha chain family. As to quaternary structure, in plastids the minimal PEP RNA polymerase catalytic core is composed of four subunits: alpha, beta, beta', and beta''. When a (nuclear-encoded) sigma factor is associated with the core the holoenzyme is formed, which can initiate transcription.

The protein localises to the plastid. The protein resides in the chloroplast. It carries out the reaction RNA(n) + a ribonucleoside 5'-triphosphate = RNA(n+1) + diphosphate. Functionally, DNA-dependent RNA polymerase catalyzes the transcription of DNA into RNA using the four ribonucleoside triphosphates as substrates. This chain is DNA-directed RNA polymerase subunit alpha, found in Thinopyrum bessarabicum (Wheatgrass).